The primary structure comprises 607 residues: Proteasome-associated ATPase (607 aa).

A compositionally biased stretch (basic and acidic residues) spans 1 to 17 (MTESDRHDTPKGDRRIS). The interval 1 to 65 (MTESDRHDTP…GRPAADNKEL (65 aa)) is disordered. Positions 59–102 (AADNKELQERVDNLTARNAKLLDTLKDARQQLVALREEVDRLGQ) form a coiled coil. 294–299 (GCGKTL) serves as a coordination point for ATP. Residues 606 to 607 (YL) form a docks into pockets in the proteasome alpha-ring region.

This sequence belongs to the AAA ATPase family. As to quaternary structure, homohexamer. Assembles into a hexameric ring structure that caps the 20S proteasome core. Strongly interacts with the prokaryotic ubiquitin-like protein Pup through a hydrophobic interface; the interacting region of ARC lies in its N-terminal coiled-coil domain. There is one Pup binding site per ARC hexamer ring. Upon ATP-binding, the C-terminus of ARC interacts with the alpha-rings of the proteasome core, possibly by binding to the intersubunit pockets.

It participates in protein degradation; proteasomal Pup-dependent pathway. ATPase which is responsible for recognizing, binding, unfolding and translocation of pupylated proteins into the bacterial 20S proteasome core particle. May be essential for opening the gate of the 20S proteasome via an interaction with its C-terminus, thereby allowing substrate entry and access to the site of proteolysis. Thus, the C-termini of the proteasomal ATPase may function like a 'key in a lock' to induce gate opening and therefore regulate proteolysis. In Gordonia bronchialis (strain ATCC 25592 / DSM 43247 / BCRC 13721 / JCM 3198 / KCTC 3076 / NBRC 16047 / NCTC 10667) (Rhodococcus bronchialis), this protein is Proteasome-associated ATPase.